A 173-amino-acid polypeptide reads, in one-letter code: Soluble secreted antigen MPT53 (173 aa).

A signal peptide spans Met1 to Ala38. A disulfide bridge links Cys73 with Cys76.

This sequence belongs to the thioredoxin family.

The protein resides in the secreted. Functionally, disulfide oxidoreductase that catalyzes the oxidation of reduced, unfolded secreted proteins to form disulfide bonds. Despite a weak homology to thioredoxin this cannot serve as a substrate for thioredoxin reductase. This Mycobacterium bovis (strain ATCC BAA-935 / AF2122/97) protein is Soluble secreted antigen MPT53 (mpt53).